The sequence spans 190 residues: Transmembrane protein 11, mitochondrial (190 aa).

The next 2 membrane-spanning stretches (helical) occupy residues 84 to 100 (VLAG…LPLD) and 107 to 124 (LPAG…GISW).

The protein belongs to the TMEM11 family. As to quaternary structure, associates with the mitochondrial contact site and cristae organizing system (MICOS) complex, composed of at least MICOS10/MIC10, CHCHD3/MIC19, CHCHD6/MIC25, APOOL/MIC27, IMMT/MIC60, APOO/MIC23/MIC26 and QIL1/MIC13. This complex was also known under the names MINOS or MitOS complex. The MICOS complex associates with mitochondrial outer membrane proteins SAMM50, MTX1, MTX2 and DNAJC11, mitochondrial inner membrane protein TMEM11 and with HSPA9. Interacts with IMMT/MIC60.

It is found in the mitochondrion inner membrane. In terms of biological role, plays a role in mitochondrial morphogenesis. In Mus musculus (Mouse), this protein is Transmembrane protein 11, mitochondrial (Tmem11).